Here is a 177-residue protein sequence, read N- to C-terminus: Shikimate kinase (177 aa).

An ATP-binding site is contributed by 17–22 (GAGKST). Residue S21 coordinates Mg(2+). The substrate site is built by D39, R63, and G85. Residue R123 participates in ATP binding. R142 contacts substrate. R160 contributes to the ATP binding site.

The protein belongs to the shikimate kinase family. Monomer. It depends on Mg(2+) as a cofactor.

Its subcellular location is the cytoplasm. The catalysed reaction is shikimate + ATP = 3-phosphoshikimate + ADP + H(+). Its pathway is metabolic intermediate biosynthesis; chorismate biosynthesis; chorismate from D-erythrose 4-phosphate and phosphoenolpyruvate: step 5/7. Functionally, catalyzes the specific phosphorylation of the 3-hydroxyl group of shikimic acid using ATP as a cosubstrate. The protein is Shikimate kinase of Halorhodospira halophila (strain DSM 244 / SL1) (Ectothiorhodospira halophila (strain DSM 244 / SL1)).